A 183-amino-acid chain; its full sequence is Peptidyl-tRNA hydrolase (183 aa).

TRNA is bound at residue Tyr-14. His-19 functions as the Proton acceptor in the catalytic mechanism. Tyr-55 and Asn-57 together coordinate tRNA.

The protein belongs to the PTH family. Monomer.

The protein resides in the cytoplasm. The enzyme catalyses an N-acyl-L-alpha-aminoacyl-tRNA + H2O = an N-acyl-L-amino acid + a tRNA + H(+). In terms of biological role, hydrolyzes ribosome-free peptidyl-tRNAs (with 1 or more amino acids incorporated), which drop off the ribosome during protein synthesis, or as a result of ribosome stalling. Catalyzes the release of premature peptidyl moieties from peptidyl-tRNA molecules trapped in stalled 50S ribosomal subunits, and thus maintains levels of free tRNAs and 50S ribosomes. The chain is Peptidyl-tRNA hydrolase from Thermus thermophilus (strain ATCC BAA-163 / DSM 7039 / HB27).